We begin with the raw amino-acid sequence, 669 residues long: Dymeclin (669 aa).

Gly2 is lipidated: N-myristoyl glycine.

The protein belongs to the dymeclin family. Myristoylated in vitro; myristoylation is not essential for protein targeting to Golgi compartment.

Its subcellular location is the cytoplasm. The protein resides in the golgi apparatus. Its function is as follows. Necessary for correct organization of Golgi apparatus. The sequence is that of Dymeclin (dym) from Xenopus laevis (African clawed frog).